A 324-amino-acid chain; its full sequence is Glyoxylate/hydroxypyruvate reductase B (324 aa).

Active-site residues include Arg237 and Glu266. His285 acts as the Proton donor in catalysis.

This sequence belongs to the D-isomer specific 2-hydroxyacid dehydrogenase family. GhrB subfamily. As to quaternary structure, homodimer.

The protein resides in the cytoplasm. The enzyme catalyses glycolate + NADP(+) = glyoxylate + NADPH + H(+). It catalyses the reaction (R)-glycerate + NAD(+) = 3-hydroxypyruvate + NADH + H(+). It carries out the reaction (R)-glycerate + NADP(+) = 3-hydroxypyruvate + NADPH + H(+). In terms of biological role, catalyzes the NADPH-dependent reduction of glyoxylate and hydroxypyruvate into glycolate and glycerate, respectively. This chain is Glyoxylate/hydroxypyruvate reductase B, found in Shigella sonnei (strain Ss046).